The sequence spans 445 residues: Zinc finger protein 296 (445 aa).

Residues Met-1–Pro-10 show a composition bias toward basic residues. Residues Met-1–Asp-20 are disordered. A Glycyl lysine isopeptide (Lys-Gly) (interchain with G-Cter in SUMO2) cross-link involves residue Lys-31. A disordered region spans residues Ser-62 to Thr-88. 3 consecutive C2H2-type zinc fingers follow at residues Leu-138–His-161, Pro-212–His-234, and Tyr-240–His-262. The disordered stretch occupies residues Asn-256–Gly-359. A compositionally biased stretch (polar residues) spans Ser-269 to Gly-278. The segment covering Pro-320–Gly-332 has biased composition (gly residues). Residues Lys-338 to Ala-351 are compositionally biased toward basic and acidic residues. C2H2-type zinc fingers lie at residues Gly-360–His-382, Tyr-388–His-410, and Val-418–His-441.

Belongs to the krueppel C2H2-type zinc-finger protein family. As to quaternary structure, interacts with KLF4. Strongly expressed in testis and embryonic stem cells.

The protein localises to the nucleus. Functionally, may be a transcriptional corepressor with KLF4. This chain is Zinc finger protein 296, found in Mus musculus (Mouse).